Here is a 132-residue protein sequence, read N- to C-terminus: Small ribosomal subunit protein uS8 (132 aa).

Belongs to the universal ribosomal protein uS8 family. As to quaternary structure, part of the 30S ribosomal subunit. Contacts proteins S5 and S12.

Its function is as follows. One of the primary rRNA binding proteins, it binds directly to 16S rRNA central domain where it helps coordinate assembly of the platform of the 30S subunit. The protein is Small ribosomal subunit protein uS8 of Anaplasma marginale (strain Florida).